The chain runs to 121 residues: uncharacterized protein (121 aa).

In terms of domain architecture, CHCH spans 43–86; that stretch reads LKECSSHVAAFADCSKDKYISVVWECRELQQLMKNCLVEYTTSE. Short sequence motifs (cx9C motif) lie at residues 46 to 56 and 68 to 78; these read CSSHVAAFADC and CRELQQLMKNC. 2 cysteine pairs are disulfide-bonded: Cys46-Cys78 and Cys56-Cys68.

This sequence belongs to the CMC family.

This is an uncharacterized protein from Dictyostelium discoideum (Social amoeba).